The primary structure comprises 628 residues: (+)-alpha-pinene synthase, chloroplastic (628 aa).

The transit peptide at 1-48 (MALVSAVPLNSKLCLRRTLFGFSHELKAIHSTVPNLGMCRGGKSIAPS) directs the protein to the chloroplast. Residues Asp-379, Asp-383, and Asp-531 each coordinate Mg(2+). The DDXXD motif signature appears at 379–383 (DDIYD). Ser-539 lines the K(+) pocket.

Belongs to the terpene synthase family. Tpsd subfamily. Requires Mg(2+) as cofactor. Mn(2+) is required as a cofactor. K(+) serves as cofactor.

It localises to the plastid. The protein resides in the chloroplast. It catalyses the reaction (2E)-geranyl diphosphate = (1R,5R)-alpha-pinene + diphosphate. It functions in the pathway terpene metabolism; oleoresin biosynthesis. Its function is as follows. Involved in defensive oleoresin formation in conifers in response to insect attack or other injury. Involved in monoterpene (C10) olefins biosynthesis. Produces mainly (+)-alpha-pinene (97%) with a small amount of (-)-alpha-pinene (3%). The polypeptide is (+)-alpha-pinene synthase, chloroplastic (PT30) (Pinus taeda (Loblolly pine)).